We begin with the raw amino-acid sequence, 267 residues long: 3-methyl-2-oxobutanoate hydroxymethyltransferase (267 aa).

Residues Asp45 and Asp84 each contribute to the Mg(2+) site. 3-methyl-2-oxobutanoate is bound by residues 45–46 (DS), Asp84, and Lys113. Glu115 provides a ligand contact to Mg(2+). Residue Glu182 is the Proton acceptor of the active site.

This sequence belongs to the PanB family. As to quaternary structure, homodecamer; pentamer of dimers. The cofactor is Mg(2+).

It is found in the cytoplasm. It carries out the reaction 3-methyl-2-oxobutanoate + (6R)-5,10-methylene-5,6,7,8-tetrahydrofolate + H2O = 2-dehydropantoate + (6S)-5,6,7,8-tetrahydrofolate. It functions in the pathway cofactor biosynthesis; coenzyme A biosynthesis. Its function is as follows. Catalyzes the reversible reaction in which hydroxymethyl group from 5,10-methylenetetrahydrofolate is transferred onto alpha-ketoisovalerate to form ketopantoate. In Saccharolobus islandicus (strain M.16.27) (Sulfolobus islandicus), this protein is 3-methyl-2-oxobutanoate hydroxymethyltransferase.